Here is a 143-residue protein sequence, read N- to C-terminus: Nitrosuccinic acid decarboxylase npaB (143 aa).

The protein belongs to the carboxymuconolactone decarboxylase family. Mg(2+) is required as a cofactor.

It functions in the pathway mycotoxin biosynthesis. Functionally, nitrosuccinic acid decarboxylase; part of the gene cluster that mediates the biosynthesis of the deadly neurotoxic nitroalkane 3-nitropropanoic acid (3-NPA) that acts as an antimetabolite of succinate and irreversibly inhibits succinate dehydrogenase and disrupts mitochondrial oxidative phosphorylation. NpaB facilitates decarboxylation of nitrosuccinic acid produced by the nitrosuccinic acid synthase npaA to yield the final product of the cluster, the lethal mycotoxin 3-NPA. In Metarhizium robertsii (strain ARSEF 23 / ATCC MYA-3075) (Metarhizium anisopliae (strain ARSEF 23)), this protein is Nitrosuccinic acid decarboxylase npaB.